Reading from the N-terminus, the 342-residue chain is S-adenosylmethionine:tRNA ribosyltransferase-isomerase (342 aa).

The protein belongs to the QueA family. As to quaternary structure, monomer.

The protein localises to the cytoplasm. The enzyme catalyses 7-aminomethyl-7-carbaguanosine(34) in tRNA + S-adenosyl-L-methionine = epoxyqueuosine(34) in tRNA + adenine + L-methionine + 2 H(+). The protein operates within tRNA modification; tRNA-queuosine biosynthesis. Functionally, transfers and isomerizes the ribose moiety from AdoMet to the 7-aminomethyl group of 7-deazaguanine (preQ1-tRNA) to give epoxyqueuosine (oQ-tRNA). The polypeptide is S-adenosylmethionine:tRNA ribosyltransferase-isomerase (Listeria innocua serovar 6a (strain ATCC BAA-680 / CLIP 11262)).